Reading from the N-terminus, the 590-residue chain is L-asparaginase (590 aa).

The Asparaginase/glutaminase domain maps to 6–357 (AHVLVLYTGG…VEKKAMMVKN (352 aa)). The active-site O-isoaspartyl threonine intermediate is the T16. Residues 44–351 (NDDDYVSTYY…KDCWELVEKK (308 aa)) form an asparaginase region. Residues 85–87 (DSS) and 117–118 (TD) each bind substrate. ANK repeat units lie at residues 398–427 (IFPQ…DLSV), 431–460 (NGRN…SFHL), 497–526 (RLGV…DINQ), and 530–559 (NGET…DPYK).

The protein in the N-terminal section; belongs to the asparaginase 1 family. In terms of tissue distribution, may be present in the larval cuticle.

It catalyses the reaction L-asparagine + H2O = L-aspartate + NH4(+). The protein is L-asparaginase of Dirofilaria immitis (Canine heartworm).